Reading from the N-terminus, the 67-residue chain is uncharacterized protein (67 aa).

2 helical membrane-spanning segments follow: residues 10–30 (EFFI…IIMW) and 40–60 (LMVG…WMVF).

The protein belongs to the plectrovirus ORF10 family.

It is found in the host membrane. This is an uncharacterized protein from Spiroplasma melliferum (SpV1).